Reading from the N-terminus, the 426-residue chain is UDP-N-acetylglucosamine 1-carboxyvinyltransferase (426 aa).

Residue Lys23–Asn24 participates in phosphoenolpyruvate binding. Arg99 provides a ligand contact to UDP-N-acetyl-alpha-D-glucosamine. The active-site Proton donor is the Asp123. UDP-N-acetyl-alpha-D-glucosamine-binding residues include Asp311 and Ile333.

This sequence belongs to the EPSP synthase family. MurA subfamily.

It localises to the cytoplasm. It catalyses the reaction phosphoenolpyruvate + UDP-N-acetyl-alpha-D-glucosamine = UDP-N-acetyl-3-O-(1-carboxyvinyl)-alpha-D-glucosamine + phosphate. Its pathway is cell wall biogenesis; peptidoglycan biosynthesis. Functionally, cell wall formation. Adds enolpyruvyl to UDP-N-acetylglucosamine. The protein is UDP-N-acetylglucosamine 1-carboxyvinyltransferase of Nocardia farcinica (strain IFM 10152).